A 393-amino-acid polypeptide reads, in one-letter code: NAD(P)H-quinone oxidoreductase subunit H, chloroplastic (393 aa).

It belongs to the complex I 49 kDa subunit family. NDH is composed of at least 16 different subunits, 5 of which are encoded in the nucleus.

Its subcellular location is the plastid. It localises to the chloroplast thylakoid membrane. It carries out the reaction a plastoquinone + NADH + (n+1) H(+)(in) = a plastoquinol + NAD(+) + n H(+)(out). The enzyme catalyses a plastoquinone + NADPH + (n+1) H(+)(in) = a plastoquinol + NADP(+) + n H(+)(out). Its function is as follows. NDH shuttles electrons from NAD(P)H:plastoquinone, via FMN and iron-sulfur (Fe-S) centers, to quinones in the photosynthetic chain and possibly in a chloroplast respiratory chain. The immediate electron acceptor for the enzyme in this species is believed to be plastoquinone. Couples the redox reaction to proton translocation, and thus conserves the redox energy in a proton gradient. The sequence is that of NAD(P)H-quinone oxidoreductase subunit H, chloroplastic from Spinacia oleracea (Spinach).